Consider the following 1204-residue polypeptide: Exportin-5 (1204 aa).

Ala-2 bears the N-acetylalanine mark. Residues 2-108 (AMDQVNALCE…ANGTLNILEE (107 aa)) form a necessary for interaction with Ran region. Residue Lys-396 is modified to N6-acetyllysine. The interval 533–640 (ELLQMVLNFD…KQLLSNELLL (108 aa)) is necessary for interaction with ILF3. Residues 641–642 (TQ) form a pre-miRNA binding region. Residue Ser-826 is modified to Phosphoserine.

It belongs to the exportin family. In terms of assembly, component of a nuclear export receptor complex composed of XPO5, RAN, dsRNA-binding proteins and dsRNA. Found in a nuclear export complex with XPO5, RAN, EEF1A1, and aminoacylated tRNA. Found in a nuclear export complex with XPO5, RAN, ILF3 and dsRNA. Found in a nuclear export complex with XPO5, RAN and pre-miRNA. Found in a nuclear export complex with XPO5, RAN, ILF3 and minihelix VA1 dsRNA. Found in a nuclear export complex with XPO5, RAN, ILF3, ZNF346 and dsRNA. Interacts with EEF1A1, ILF3, NUP153, NUP214 and ZNF346. Interacts with RAN and cargo proteins in a GTP-dependent manner. Interacts with isoform 5 of ADAR/ADAR1 (via DRBM domains). Interacts with SMAD4; mediates nuclear export of SMAD4. Interacts with RAN (GTP-bound form). As to expression, expressed in heart, brain, placenta, lung, skeletal muscle, kidney and pancreas.

Its subcellular location is the nucleus. It is found in the cytoplasm. Functionally, mediates the nuclear export of proteins bearing a double-stranded RNA binding domain (dsRBD) and double-stranded RNAs (cargos). XPO5 in the nucleus binds cooperatively to the RNA and to the GTPase Ran in its active GTP-bound form. Proteins containing dsRBDs can associate with this trimeric complex through the RNA. Docking of this complex to the nuclear pore complex (NPC) is mediated through binding to nucleoporins. Upon transit of a nuclear export complex into the cytoplasm, hydrolysis of Ran-GTP to Ran-GDP (induced by RANBP1 and RANGAP1, respectively) cause disassembly of the complex and release of the cargo from the export receptor. XPO5 then returns to the nuclear compartment by diffusion through the nuclear pore complex, to mediate another round of transport. The directionality of nuclear export is thought to be conferred by an asymmetric distribution of the GTP- and GDP-bound forms of Ran between the cytoplasm and nucleus. Overexpression may in some circumstances enhance RNA-mediated gene silencing (RNAi). Mediates nuclear export of isoform 5 of ADAR/ADAR1 in a RanGTP-dependent manner. Mediates the nuclear export of micro-RNA precursors, which form short hairpins. Also mediates the nuclear export of synthetic short hairpin RNAs used for RNA interference. In some circumstances can also mediate the nuclear export of deacylated and aminoacylated tRNAs. Specifically recognizes dsRNAs that lack a 5'-overhang in a sequence-independent manner, have only a short 3'-overhang, and that have a double-stranded length of at least 15 base-pairs. Binding is dependent on Ran-GTP. In terms of biological role, (Microbial infection) Mediates the nuclear export of adenovirus VA1 dsRNA. The protein is Exportin-5 (XPO5) of Homo sapiens (Human).